Consider the following 546-residue polypeptide: Chaperonin GroEL (546 aa).

ATP contacts are provided by residues 30–33 (TLGP), Lys51, 87–91 (DGTTT), Gly415, 479–481 (NAA), and Asp495.

It belongs to the chaperonin (HSP60) family. As to quaternary structure, forms a cylinder of 14 subunits composed of two heptameric rings stacked back-to-back. Interacts with the co-chaperonin GroES.

It is found in the cytoplasm. The enzyme catalyses ATP + H2O + a folded polypeptide = ADP + phosphate + an unfolded polypeptide.. Together with its co-chaperonin GroES, plays an essential role in assisting protein folding. The GroEL-GroES system forms a nano-cage that allows encapsulation of the non-native substrate proteins and provides a physical environment optimized to promote and accelerate protein folding. In Xanthomonas campestris pv. phaseoli, this protein is Chaperonin GroEL.